The following is a 227-amino-acid chain: MRTGLIAKKLGMTRLFKEDGTHVPVTVLHVDNLQVVDVRTQDRDGYTAVQLGFGNAKVKNVSKPNRGHFARVKVEPKKKLAEFRVADDAVLEAGATLSAAHFVVGQKVDVTSTSKGKGFAGAMKRWNFAGLEASHGVSISHRSHGSTGNRQDPGKTFKNKKMAGHLGSERVTTLNLEVAAVDAEKNLLMVRGSVPGGKNELVLVRDAIKKARHAEAPYPAALVAAAG.

Gln151 is subject to N5-methylglutamine.

Belongs to the universal ribosomal protein uL3 family. Part of the 50S ribosomal subunit. Forms a cluster with proteins L14 and L19. Methylated by PrmB.

Its function is as follows. One of the primary rRNA binding proteins, it binds directly near the 3'-end of the 23S rRNA, where it nucleates assembly of the 50S subunit. The protein is Large ribosomal subunit protein uL3 of Gluconacetobacter diazotrophicus (strain ATCC 49037 / DSM 5601 / CCUG 37298 / CIP 103539 / LMG 7603 / PAl5).